Reading from the N-terminus, the 359-residue chain is MIAAQAKLVYQLNKYYTERCQARKAAIAKTIREVCKVVSDVLKEVEVQEPRFISSLSEIDARYEGLEVISPTEFEVVLYLNQMGVFNFVDDGSLPGCAVLKLSDGRKRSMSLWVEFITASGYLSARKIRSRFQTLVAQAVDKCSYRDVVKMIADTSEVKLRIRERYVVQITPAFKCTGIWPRSAAQWPMPHIPWPGPNRVAEVKAEGFNLLSKECYSLTGKQSSAESDAWVLQFGEAENRLLMGGCRNKCLSVLKTLRDRHLELPGQPLNNYHMKTLLLYECEKHPRETDWDEACLGDRLNGILLQLISCLQCRRCPHYFLPNLDLFQGKPHSALESAAKQTWRLAREILTNPKSLDKL.

This sequence belongs to the mab-21 family. In terms of tissue distribution, expressed in the adult cerebellum and eye, with lower levels in the adult forebrain. In embryos at 10.5 days post-coitum strongly expressed in the rostral and distal regions of the developing neural retina, with no expression immediately adjacent to the closing optic fissure. Expression is also observed in the dorsal and ventral aspects of the developing forelimb bud and in the developing pharyngeal arches, as well as in the midbrain.

Its subcellular location is the nucleus. The protein localises to the cytoplasm. Functionally, required for several aspects of embryonic development including normal development of the eye, notochord, neural tube and other organ tissues, and for embryonic turning. The polypeptide is Protein mab-21-like 2 (Mab21l2) (Mus musculus (Mouse)).